Consider the following 230-residue polypeptide: Type 4 apparatus protein DotY (230 aa).

The tract at residues Glu202–Arg230 is disordered. Positions Lys204–Ile217 are enriched in basic and acidic residues.

In terms of assembly, the T4BSS is a complex nanomachine composed of several subcomplexes. This subunit is part of the Type IV Coupling Complex (T4CC), a subcomplex composed of the DotLMNYZ core and the IcmSW-LvgA adapter subunits, linked by the C-terminal tail of DotL. Six DotLMNYZ hetero-pentameric units may assemble into a hexameric nanomachine, forming an inner membrane channel for effectors to pass through. Interacts exclusively with DotZ. DotY and DotZ are co-dependent for the assembly into the T4CC.

Its subcellular location is the cytoplasm. Component of the Dot/Icm type IVB secretion system (T4BSS), which is used to inject bacterial effector proteins into eukaryotic host cells. Part of a subcomplex which recruits effector proteins and delivers them to the core transmembrane subcomplex. DotY and DotZ play a role in effector translocation, but are not essential and do not influence the stability of the subcomplex main components. The DotY/DotZ main function is to optimize secretion by modulating the delivery trajectory of the IcmSW module and the localization of the machinery to the poles. The chain is Type 4 apparatus protein DotY from Legionella pneumophila subsp. pneumophila (strain Philadelphia 1 / ATCC 33152 / DSM 7513).